The sequence spans 294 residues: Diaminopimelate epimerase (294 aa).

Residues N11 and N78 each coordinate substrate. C87 serves as the catalytic Proton donor. Substrate is bound by residues 88–89, N167, N203, and 221–222; these read GN and ER. C230 acts as the Proton acceptor in catalysis. 231 to 232 contributes to the substrate binding site; that stretch reads GT.

It belongs to the diaminopimelate epimerase family. Homodimer.

It localises to the cytoplasm. The catalysed reaction is (2S,6S)-2,6-diaminopimelate = meso-2,6-diaminopimelate. The protein operates within amino-acid biosynthesis; L-lysine biosynthesis via DAP pathway; DL-2,6-diaminopimelate from LL-2,6-diaminopimelate: step 1/1. Its function is as follows. Catalyzes the stereoinversion of LL-2,6-diaminopimelate (L,L-DAP) to meso-diaminopimelate (meso-DAP), a precursor of L-lysine and an essential component of the bacterial peptidoglycan. The chain is Diaminopimelate epimerase from Mycobacterium avium (strain 104).